A 225-amino-acid chain; its full sequence is MARMKARSAKGKRVAKDTWKSKVWYDIYTPQSFGGDVIGQTPANDPATLIGRISEISLRDLTNEHSKHMTRMYFKVDGVSGNNATSQFVGHDTTREYLKSQVRRRRSKINAIVDVRTKDGFKLRVKALVLTAVRARDHHKTEIRVKMEQIIKDMAKETAFAEFVHAMLMGGLGSKIYGDCKKMFPLKRVEIFKSEVLEFGKAVEAPVEEAAAEEVAEAPVAETQE.

It belongs to the eukaryotic ribosomal protein eS1 family.

The chain is Small ribosomal subunit protein eS1 from Methanococcus maripaludis (strain C6 / ATCC BAA-1332).